The following is a 634-amino-acid chain: MGKVVGIDLGTTNSCVAVMEGGKPVVIANAEGFRTTPSVVAYTKNQDQLVGQIAKRQAVMNTDNTFYSAKRFVGRRVDEVNEESKEVSYEVEKSGSNVRLKCPVLDKQFSPEEVSAQVLRKLAEDAGKYLGENVTQAVITVPAYFNDSQRQATKDAGKIAGLEVLRIINEPTAAALAYGLDKKSNERILVFDLGGGTFDVSVLEVGDGVFEVLSTSGDTHLGGDDFDKVIVDHLAATFKANEGIDLRQDKQALQRLTEAAEKAKIELSSATQSEINLPFITATSEGPKHLDLTLTRAKFEELASKLIDRCRVPVEQALKDAKLSSGELDEIVMVGGSSRMPAVQELVKRVTGKDPNQTVNPDEVVAVGAAIQGGVLAGEVKDILLLDVTPLSLGVETLGGVMTKMITRNTTVPTKKSETYSTAVDGQTNVEIHVLQGEREMASDNKSLGTFRLDGIPPAPRGVPQIEVTFDIDANGILSVNAKDKGSGKEQSISITGASTLSENEVEKMVKDAETNASADKEKRERIDIKNQAETLVYQAEKQLGELADKVDADSKAKVEDKRVKLKAAIEKDDFDAMKSLLEELQQELYTVGASVYQQAGAAAAESGADAGAAGAGDSSSGDDVIDAEFTESK.

Thr-197 is modified (phosphothreonine; by autocatalysis). Residues Gly-601 to Asp-623 show a composition bias toward low complexity. The disordered stretch occupies residues Gly-601–Lys-634. A compositionally biased stretch (acidic residues) spans Asp-624–Lys-634.

Belongs to the heat shock protein 70 family.

Functionally, acts as a chaperone. This chain is Chaperone protein dnaK2 (dnaK2), found in Prochlorococcus marinus (strain MIT 9313).